The primary structure comprises 461 residues: Xyloglucan 6-xylosyltransferase 2 (461 aa).

Residues 1–20 lie on the Cytoplasmic side of the membrane; that stretch reads MIERCLGAYRCRRIQRALRQ. Residues 21–40 form a helical; Signal-anchor for type II membrane protein membrane-spanning segment; sequence LKVTILCLLLTVVVLRSTIG. Topologically, residues 41 to 461 are lumenal; the sequence is AGKFGTPEQD…KAVKVQTNQV (421 aa). Residues 74–95 form a disordered region; sequence QTGGDSSSGDGGGNSGGSNNYE. An N-linked (GlcNAc...) asparagine glycan is attached at N432.

This sequence belongs to the glycosyltransferase 34 family. Homodimer. Interacts with XXT1 and XXT5. Interacts with FUT1 and XLT2.

It is found in the golgi apparatus membrane. The enzyme catalyses Transfers an alpha-D-xylosyl residue from UDP-D-xylose to a glucose residue in xyloglucan, forming an alpha-(1-&gt;6)-D-xylosyl-D-glucose linkage.. Xylosyltransferase specific to UDP-D-xylose that accepts both cellopentaose and cellohexaose as substrates, with a better use of cellohexaose, to produce xyloglucan. Adds preferentially the first xylosyl residue to the fourth glucosyl residue from the reducing end of both acceptors. Transfer one xylose mainly to the second glucose residue from the non-reducing end. The acceptor should have a minimum of four glucose residues. Associates with other xyloglucan-synthesizing enzymes to form multiprotein complexes for xyloglucan synthesis in the Golgi. The protein is Xyloglucan 6-xylosyltransferase 2 (XXT2) of Arabidopsis thaliana (Mouse-ear cress).